The sequence spans 345 residues: 2-oxoglutarate-dependent ethylene/succinate-forming enzyme (345 aa).

In terms of domain architecture, Fe2OG dioxygenase spans 167–288 (GWHHMRVLRF…RFAMAYFHEP (122 aa)). Histidine 191 and histidine 270 together coordinate Fe cation.

The protein belongs to the iron/ascorbate-dependent oxidoreductase family. Monomer. The cofactor is Fe(2+).

The enzyme catalyses 2-oxoglutarate + O2 + 2 H(+) = ethene + 3 CO2 + H2O. It carries out the reaction L-arginine + 2-oxoglutarate + O2 = guanidine + L-glutamate 5-semialdehyde + succinate + CO2. It functions in the pathway alkene biosynthesis; ethylene biosynthesis via 2-oxoglutarate. Simultaneously catalyzes two reactions, namely formation of ethylene and of succinate from 2-oxoglutarate. The sequence is that of 2-oxoglutarate-dependent ethylene/succinate-forming enzyme (efe) from Ralstonia nicotianae (strain ATCC BAA-1114 / GMI1000) (Ralstonia solanacearum).